The sequence spans 51 residues: Large ribosomal subunit protein bL33 (51 aa).

Residues 1–21 (MRDKIKLESSAGTGHFYTTTK) are disordered. Positions 10–20 (SAGTGHFYTTT) are enriched in polar residues.

It belongs to the bacterial ribosomal protein bL33 family.

The sequence is that of Large ribosomal subunit protein bL33 (rpmG) from Neisseria meningitidis serogroup A / serotype 4A (strain DSM 15465 / Z2491).